Reading from the N-terminus, the 263-residue chain is Tryptophan synthase alpha chain (263 aa).

Catalysis depends on proton acceptor residues Glu-47 and Asp-58.

The protein belongs to the TrpA family. As to quaternary structure, tetramer of two alpha and two beta chains.

The protein localises to the plastid. Its subcellular location is the chloroplast. It catalyses the reaction (1S,2R)-1-C-(indol-3-yl)glycerol 3-phosphate + L-serine = D-glyceraldehyde 3-phosphate + L-tryptophan + H2O. The protein operates within amino-acid biosynthesis; L-tryptophan biosynthesis; L-tryptophan from chorismate: step 5/5. Its function is as follows. The alpha subunit is responsible for the aldol cleavage of indoleglycerol phosphate to indole and glyceraldehyde 3-phosphate. This Pyropia yezoensis (Susabi-nori) protein is Tryptophan synthase alpha chain.